Consider the following 515-residue polypeptide: GMP synthase [glutamine-hydrolyzing] (515 aa).

The Glutamine amidotransferase type-1 domain occupies 6 to 198 (KVIILDFGSQ…VFKVAGLKAD (193 aa)). Residue Cys-83 is the Nucleophile of the active site. Catalysis depends on residues His-172 and Glu-174. The GMPS ATP-PPase domain maps to 199–390 (WTMSSFVENC…LGLPEFIIWR (192 aa)). 226 to 232 (SGGIDST) provides a ligand contact to ATP.

In terms of assembly, homodimer.

The enzyme catalyses XMP + L-glutamine + ATP + H2O = GMP + L-glutamate + AMP + diphosphate + 2 H(+). Its pathway is purine metabolism; GMP biosynthesis; GMP from XMP (L-Gln route): step 1/1. Functionally, catalyzes the synthesis of GMP from XMP. This Maridesulfovibrio salexigens (strain ATCC 14822 / DSM 2638 / NCIMB 8403 / VKM B-1763) (Desulfovibrio salexigens) protein is GMP synthase [glutamine-hydrolyzing].